We begin with the raw amino-acid sequence, 1699 residues long: MTKENQIVLDERVKENQHLQEEEKLALDAVYLNQITYIKAHWHVWVPTNCHILLKALDSCFLNGDPLGKSKLSVILHVKCSEDYPQRKPAVDLLDPQGLSKEDVQNLLTILRQMADTWEGCVVIAELAHRVREFLTDHTPRPAGSFHDDMLANKVRTEAEKQRKRLDTEQKELELLEEEMRQRNAIEMEKTLNGTRQENETRIIGGRRIVVLSNMPNTQLLISEWTFRFSSNRNPAEGKRKDFAPFLQKLDAVYNEIQKLCEIKGLDQNLVEYAFVHLQKISVSPDQILIQLNVAQKIFSSEENMQDTYELIVQKSNLLRLLAAQAICGLRYLHEASMTHKHLTLGSVWTRNSTGDCVFRFSDFGSMGPLLDLVKMFGDICSGKYVARDEDKEKEYDRRRKDLFQLGTLLDGLILATRGSTYSRVPTPVEGNQNTGTNLLGNFIAKCQEAKNIDQLVEDPFLKEECQSESENIFTPFGGAMSPDGRMLADNVIIRVLGRGGFGDVVLVRNKMDSTDYAIKRIPLNAKSDKLNRKIAKEAKFFAKLNHPNMVRYYYAWAEDLIPIVEETSDDDSSLGAVPIPGKEKIGKKGKLKTGKSLEDKENKANLGGGDSLMPMNLRGLVKDHSIGVDAKEWSTPFGKPEGPKCASRMRQSKRSTPSGGLKHLSECSSDDEDDDDSSEIDWDAESEEVEDEESDDSDEEDEDDGERLVQLNTETSTGADSVFERSTADEDVVFTAESEDLNAKRRESIELMEINTTTTSKSKLAIDVVPVRKPRILCIQMEYCDRATLRQYIDENHCFNAPTEVWRIFSEVLCGLKYMHDMAMIHRDIKPLNIFLTSQNGVKIGDFGLATLEAMSSKGKIVGGAAEKSTSIEAMLSPNGVKSKGSDVHQTRDIGTQLYMAPELFVDELVHKAPYTSKIDIYSAGVVLFEMFYRPLPPSMDRVSTLNNLRDDIKIPSDFGAGLAAPMAGLARRTVEKMLQRNPDERPTADDLLNDEDLPMHTKEDATFRNLCEKVIKKRDGRMNAWLLDKQFKEEVPTSLNYCYDVDICLERAKYNNREVLVETLRAEFCKILKIHSFEKLHTHTLMPVSTALAAASVRTKPVEVLDRSGVPVALPMDLRQNFVRFCVRNSVQRMKRFNFGRVYSQTSANGHPHERWECCVDCIGPQCSSPSLEAELLLVACEMMIGSLPGMKFTLKIGHAQLIEAQIRHLKLSDDVRAELLDALHLISVSDRPHSHKEKMDMLTPKIGAKAANIITKLLIPVEDNFGAFKEKVACFRKKLKVDAARVLVDKAIRDLEEIVGTFKFCRTEAIEQISIVYDSQTCYRPRTFGDGLLFQIQVEKPSTIANNKRGRRQNVLAGGRYDSALLRERHPRDFVYEIPLCISGFGVAMDVVSQIRDSINKSANIPKTPQNHCKVLICSMVQPDGSNLITQKFELAKKLWSMGIEADVFHIPVDDLESLTEHRNRASITHILAVYNTLNEVICKTETSSETMDVDSAISSVWRGVQALDGQSIHMTPCGGGPISSISTPGEAHHHDDHHPGTPVIASKCFRSSVSTTVATTSIRPISATVANLNVILVTSADRFHKVMKEKKRVESQVRNHLTEFVAHFTSKTRIEVLVCDIPADVIKKIVSELTKTSSEAEIDKLFDQLIQKHGKVDLSPLRRQFHITLNGISTGSAQVAILFYRQSDNFYRYLV.

The 117-residue stretch at 22 to 138 folds into the RWD domain; it reads EEKLALDAVY…HRVREFLTDH (117 aa). 2 Protein kinase domains span residues 108 to 507 and 508 to 999; these read LTIL…DVVL and VRNK…DEDL. Residues 114 to 122, Lys-154, 497 to 505, and Lys-520 contribute to the ATP site; these read MADTWEGCV and LGRGGFGDV. 2 disordered regions span residues 572–615 and 632–725; these read DSSL…SLMP and KEWS…SVFE. The span at 669-706 shows a compositional bias: acidic residues; it reads SSDDEDDDDSSEIDWDAESEEVEDEESDDSDEEDEDDG. The span at 711 to 720 shows a compositional bias: polar residues; that stretch reads QLNTETSTGA. The Proton acceptor role is filled by Asp-829.

It belongs to the protein kinase superfamily. Ser/Thr protein kinase family. GCN2 subfamily.

The enzyme catalyses L-seryl-[protein] + ATP = O-phospho-L-seryl-[protein] + ADP + H(+). It carries out the reaction L-threonyl-[protein] + ATP = O-phospho-L-threonyl-[protein] + ADP + H(+). Serine/threonine-protein kinase which phosphorylates the alpha subunit of eukaryotic translation-initiation factor 2 (eIF2alpha), leading to its inactivation and thus to a rapid reduction of translational initiation and repression of global protein synthesis. Involved in the unfolded protein response (UPR) triggered by several stresses including mitochondrial, osmotic and oxidative stresses, amino acid deprivation and UV irradiation, probably by phosphorylating and inhibiting eIF2alpha. In addition, leads to the selective translation/transcription of some mRNA including atf-5, pha-4 and gpdh-1 which are part of the UPR. Required for maintaining lifespan during amino acid starvation. Involved in hypoxia-mediated adaptive protective response. The chain is Eukaryotic translation initiation factor 2-alpha kinase gcn-2 from Caenorhabditis elegans.